The following is a 275-amino-acid chain: 4-diphosphocytidyl-2-C-methyl-D-erythritol kinase (275 aa).

Lys14 is a catalytic residue. 98 to 108 (PMGAGLGGGSS) contributes to the ATP binding site. Asp140 is an active-site residue.

It belongs to the GHMP kinase family. IspE subfamily.

It catalyses the reaction 4-CDP-2-C-methyl-D-erythritol + ATP = 4-CDP-2-C-methyl-D-erythritol 2-phosphate + ADP + H(+). It participates in isoprenoid biosynthesis; isopentenyl diphosphate biosynthesis via DXP pathway; isopentenyl diphosphate from 1-deoxy-D-xylulose 5-phosphate: step 3/6. Catalyzes the phosphorylation of the position 2 hydroxy group of 4-diphosphocytidyl-2C-methyl-D-erythritol. The protein is 4-diphosphocytidyl-2-C-methyl-D-erythritol kinase of Francisella tularensis subsp. tularensis (strain FSC 198).